We begin with the raw amino-acid sequence, 317 residues long: Metaxin-1 (317 aa).

Residues K38, K41, K78, and K168 each participate in a glycyl lysine isopeptide (Lys-Gly) (interchain with G-Cter in ubiquitin) cross-link. Residues 272-292 (ILSVLAGLAAMVGYALLSGIV) form a helical membrane-spanning segment.

This sequence belongs to the metaxin family. Interacts with MTX2/metaxin-2. Associates with the mitochondrial contact site and cristae organizing system (MICOS) complex, composed of at least MICOS10/MIC10, CHCHD3/MIC19, CHCHD6/MIC25, APOOL/MIC27, IMMT/MIC60, APOO/MIC23/MIC26 and QIL1/MIC13. This complex was also known under the names MINOS or MitOS complex. The MICOS complex associates with mitochondrial outer membrane proteins SAMM50, MTX1 and MTX2 (together described as components of the mitochondrial outer membrane sorting assembly machinery (SAM) complex) and DNAJC11, mitochondrial inner membrane protein TMEM11 and with HSPA9. The MICOS and SAM complexes together with DNAJC11 are part of a large protein complex spanning both membranes termed the mitochondrial intermembrane space bridging (MIB) complex. Interacts with ARMC1. Post-translationally, ubiquitinated by PRKN during mitophagy, leading to its degradation and enhancement of mitophagy. Deubiquitinated by USP30. In terms of tissue distribution, ubiquitous. Higher levels are seen in the kidney as compared to other tissues.

It is found in the mitochondrion outer membrane. Its function is as follows. Involved in transport of proteins into the mitochondrion. Essential for embryonic development. The sequence is that of Metaxin-1 (Mtx1) from Mus musculus (Mouse).